The chain runs to 161 residues: 18.1 kDa class I heat shock protein (161 aa).

Positions 47–161 constitute a sHSP domain; sequence ETAAFAGARI…PDVKSIQVTG (115 aa).

Belongs to the small heat shock protein (HSP20) family. As to quaternary structure, may form oligomeric structures.

Its subcellular location is the cytoplasm. The polypeptide is 18.1 kDa class I heat shock protein (HSP18.1) (Oryza sativa subsp. japonica (Rice)).